We begin with the raw amino-acid sequence, 491 residues long: Protein DETOXIFICATION 28 (491 aa).

Transmembrane regions (helical) follow at residues 47 to 67 (IVGPAIFTRVTTNLIFVITQA), 77 to 97 (LAAISIVNNVIIGFNYSLFIG), 127 to 147 (IVLFLFSILLLPMYIFATPIL), 160 to 180 (SGIISVWAIPTHFSFAFFFPI), 192 to 212 (VIAISSGVSLVVHIFVCWLFV), 228 to 248 (VSWWLNVFILFTYTTCGGCPL), 272 to 292 (GIMVCLENWYYRMLIVMTGNL), 302 to 322 (MSICMSINGLEMMVPLAFFAG), 352 to 372 (IIGIIISVLIYFLLDQIGWMF), 387 to 407 (ILLSFAILLNSVQPVLSGVAV), 414 to 434 (LVAFINLGCYYFIGLPLGIVM), and 444 to 464 (GIWAGMIFGGTMVQTLILIFI).

Belongs to the multi antimicrobial extrusion (MATE) (TC 2.A.66.1) family.

The protein localises to the membrane. The sequence is that of Protein DETOXIFICATION 28 from Arabidopsis thaliana (Mouse-ear cress).